Consider the following 287-residue polypeptide: Inhibitory synaptic factor 1 (287 aa).

The interval 1-22 (MSQSRAPAREPSETPSQREQIR) is disordered. A coiled-coil region spans residues 25–58 (MKMVIQQLEGILKELKDVAHELREVVGQIDKLTS). Disordered stretches follow at residues 113–174 (RRSA…GTRE) and 189–287 (CDDD…NKDL). Residues 153–167 (EEASSSTHSQSQKTS) show a composition bias toward low complexity. A compositionally biased stretch (acidic residues) spans 189-209 (CDDDEDEDEDEDGRDEEEDKL). The span at 259–274 (RNSSTQTVSDKSTQTL) shows a compositional bias: polar residues.

It belongs to the INSYN1 family.

The protein localises to the postsynaptic density. In terms of biological role, may be a component of the protein machinery at the inhibitory synapses, probably acting as a scaffold. The sequence is that of Inhibitory synaptic factor 1 from Danio rerio (Zebrafish).